We begin with the raw amino-acid sequence, 2962 residues long: Sex determination and dosage compensation protein sdc-2 (2962 aa).

2 disordered regions span residues 1-28 (MSDE…ADPD) and 1061-1110 (DKRS…QVDP). The segment covering 15–27 (SFNESDSPDEADP) has biased composition (acidic residues). Coiled coils occupy residues 995 to 1085 (LESA…LADK) and 1140 to 1268 (REER…KRVS). 2 disordered regions span residues 1535–1554 (PASL…GSPV) and 2198–2227 (LDSS…NQLD). Residues 2212 to 2225 (FEDSPSEDENDENQ) show a composition bias toward acidic residues.

As to quaternary structure, component of the SDC complex, which consists of sdc-1, sdc-2 and sdc-3. Within the complex, interacts with sdc-1 and sdc-3. As to expression, expressed in hermaphrodites (XX), but absent in males (XO) (at protein level).

The protein localises to the chromosome. In terms of biological role, component of the SDC complex that functions in sex determination and in X chromosome dosage compensation specifically in hermaphrodite (XX) animals. Required for the recruitment of the condensin I-like dosage compensation complex to the male sex-determining autosomal gene her-1, thereby contributing to its repression and initiating hermaphrodite sexual development. Plays a central role in X-chromosome recognition and in the recruitment and assembly of the dosage compensation complex and the dosage compensation protein dpy-21 onto the X chromosomes in hermaphrodites, which leads to a reduction of X-linked gene transcription and an equalization of X-linked gene expression between the sexes. May confer protection against toxicity induced by heavy metals such as arsenite. In Caenorhabditis elegans, this protein is Sex determination and dosage compensation protein sdc-2.